The sequence spans 188 residues: Ribosome-recycling factor (188 aa).

It belongs to the RRF family.

Its subcellular location is the cytoplasm. In terms of biological role, responsible for the release of ribosomes from messenger RNA at the termination of protein biosynthesis. May increase the efficiency of translation by recycling ribosomes from one round of translation to another. This is Ribosome-recycling factor from Anaeromyxobacter sp. (strain K).